The sequence spans 282 residues: Serine/threonine-protein kinase Aurora-2 (282 aa).

Positions 19 to 270 (FDIGKPLGRG…LHKLLEHPWI (252 aa)) constitute a Protein kinase domain. ATP is bound by residues 25–33 (LGRGKFGHV) and Lys-48. Asp-142 functions as the Proton acceptor in the catalytic mechanism. A Phosphoserine modification is found at Ser-164. The residue at position 173 (Thr-173) is a Phosphothreonine.

Belongs to the protein kinase superfamily. Ser/Thr protein kinase family. Aurora subfamily. In terms of processing, phosphorylation at Thr-173 may regulate activity and degradation of AUR2 in a cell cycle dependent manner. As to expression, abundant in roots, flowers and flower buds, low or absent in expanded leaves, stems and siliques.

The protein resides in the nucleus membrane. The protein localises to the cytoplasm. It localises to the cytoskeleton. Its subcellular location is the spindle. It is found in the spindle pole. The enzyme catalyses L-seryl-[protein] + ATP = O-phospho-L-seryl-[protein] + ADP + H(+). The catalysed reaction is L-threonyl-[protein] + ATP = O-phospho-L-threonyl-[protein] + ADP + H(+). Phosphorylates specifically 'Ser-10' of histone H3 in vitro. Associates with cytoskeletal structures that are necessary for cytokinesis and with the microtubule spindle. Might colocalize with gamma-tubulin and function in microtubule organizing centers (MTOCs). The protein is Serine/threonine-protein kinase Aurora-2 (AUR2) of Arabidopsis thaliana (Mouse-ear cress).